Here is a 53-residue protein sequence, read N- to C-terminus: U13-myrmicitoxin-Tb1a (53 aa).

Positions 1–23 (MKLIYIFSLVAVIAVTMIPGIMG) are cleaved as a signal peptide. The propeptide occupies 24-29 (EAEAEG). Position 52 is a lysine amide (Lys52).

As to expression, expressed by the venom gland.

It is found in the secreted. Functionally, in vivo, this neurotoxin paralyzes about 70% of blowflies (L.caesar) one hour after intrathoracic injection, when tested at high doses (45 nmol/g). The sequence is that of U13-myrmicitoxin-Tb1a from Tetramorium bicarinatum (Tramp ant).